A 51-amino-acid polypeptide reads, in one-letter code: Large ribosomal subunit protein eL39 (51 aa).

The protein belongs to the eukaryotic ribosomal protein eL39 family.

This is Large ribosomal subunit protein eL39 from Methanobrevibacter smithii (strain ATCC 35061 / DSM 861 / OCM 144 / PS).